Here is an 843-residue protein sequence, read N- to C-terminus: Glycogen phosphorylase, brain form (843 aa).

Ala2 bears the N-acetylalanine mark. The residue at position 15 (Ser15) is a Phosphoserine; by PHK; in form phosphorylase A. Residues Asp43, Tyr197, and Arg310 each coordinate AMP. Position 197 is a phosphotyrosine (Tyr197). The residue at position 473 (Tyr473) is a Phosphotyrosine. Lys569 is a pyridoxal 5'-phosphate binding site. Positions 677–678 are pyridoxal 5'-phosphate; sequence TG. At Lys681 the chain carries N6-(pyridoxal phosphate)lysine.

The protein belongs to the glycogen phosphorylase family. In terms of assembly, homodimer. Dimers associate into a tetramer to form the enzymatically active phosphorylase A. The cofactor is pyridoxal 5'-phosphate. Phosphorylated. Phosphorylation of Ser-15 converts phosphorylase B (unphosphorylated) to phosphorylase A.

The enzyme catalyses [(1-&gt;4)-alpha-D-glucosyl](n) + phosphate = [(1-&gt;4)-alpha-D-glucosyl](n-1) + alpha-D-glucose 1-phosphate. Activity of phosphorylase is controlled both by allosteric means (through the non-covalent binding of metabolites) and by covalent modification. Thus AMP allosterically activates, whereas ATP, ADP, and glucose-6-phosphate allosterically inhibit, phosphorylase B. Activated upon phosphorylation. In terms of biological role, glycogen phosphorylase that regulates glycogen mobilization. Phosphorylase is an important allosteric enzyme in carbohydrate metabolism. Enzymes from different sources differ in their regulatory mechanisms and in their natural substrates. However, all known phosphorylases share catalytic and structural properties. The protein is Glycogen phosphorylase, brain form of Homo sapiens (Human).